Consider the following 199-residue polypeptide: Imidazole glycerol phosphate synthase subunit HisH (199 aa).

The Glutamine amidotransferase type-1 domain occupies 3–199; that stretch reads NITIIDTGCA…LKNFVEKVPF (197 aa). Cys78 acts as the Nucleophile in catalysis. Residues His178 and Glu180 contribute to the active site.

In terms of assembly, heterodimer of HisH and HisF.

The protein resides in the cytoplasm. It catalyses the reaction 5-[(5-phospho-1-deoxy-D-ribulos-1-ylimino)methylamino]-1-(5-phospho-beta-D-ribosyl)imidazole-4-carboxamide + L-glutamine = D-erythro-1-(imidazol-4-yl)glycerol 3-phosphate + 5-amino-1-(5-phospho-beta-D-ribosyl)imidazole-4-carboxamide + L-glutamate + H(+). The catalysed reaction is L-glutamine + H2O = L-glutamate + NH4(+). Its pathway is amino-acid biosynthesis; L-histidine biosynthesis; L-histidine from 5-phospho-alpha-D-ribose 1-diphosphate: step 5/9. Its function is as follows. IGPS catalyzes the conversion of PRFAR and glutamine to IGP, AICAR and glutamate. The HisH subunit catalyzes the hydrolysis of glutamine to glutamate and ammonia as part of the synthesis of IGP and AICAR. The resulting ammonia molecule is channeled to the active site of HisF. The sequence is that of Imidazole glycerol phosphate synthase subunit HisH (hisH) from Haemophilus influenzae (strain ATCC 51907 / DSM 11121 / KW20 / Rd).